A 203-amino-acid polypeptide reads, in one-letter code: Putative GPI-anchored protein YHR214W (203 aa).

The first 23 residues, Met-1–Gly-23, serve as a signal peptide directing secretion. 2 N-linked (GlcNAc...) asparagine glycosylation sites follow: Asn-28 and Asn-138. The GPI-anchor amidated asparagine moiety is linked to residue Asn-184. Residues Ala-185–Leu-203 constitute a propeptide, removed in mature form.

The protein localises to the cell membrane. The protein is Putative GPI-anchored protein YHR214W of Saccharomyces cerevisiae (strain ATCC 204508 / S288c) (Baker's yeast).